The chain runs to 494 residues: Glutamyl-tRNA(Gln) amidotransferase subunit A (494 aa).

Catalysis depends on charge relay system residues Lys78 and Ser158. Catalysis depends on Ser182, which acts as the Acyl-ester intermediate.

It belongs to the amidase family. GatA subfamily. In terms of assembly, heterotrimer of A, B and C subunits.

The enzyme catalyses L-glutamyl-tRNA(Gln) + L-glutamine + ATP + H2O = L-glutaminyl-tRNA(Gln) + L-glutamate + ADP + phosphate + H(+). Functionally, allows the formation of correctly charged Gln-tRNA(Gln) through the transamidation of misacylated Glu-tRNA(Gln) in organisms which lack glutaminyl-tRNA synthetase. The reaction takes place in the presence of glutamine and ATP through an activated gamma-phospho-Glu-tRNA(Gln). The polypeptide is Glutamyl-tRNA(Gln) amidotransferase subunit A (Xanthobacter autotrophicus (strain ATCC BAA-1158 / Py2)).